The primary structure comprises 471 residues: Microtubule-associated tyrosine carboxypeptidase 1 (471 aa).

Disordered regions lie at residues 1–40 (MVLD…PLYP) and 76–116 (HMRR…LRPA). His-280 is a binding site for Zn(2+). The active-site Nucleophile is the Glu-281. Residues His-285 and Glu-316 each contribute to the Zn(2+) site.

This sequence belongs to the peptidase MATCAP family. Requires Zn(2+) as cofactor.

Its subcellular location is the cytoplasm. It localises to the cytoskeleton. It catalyses the reaction C-terminal L-alpha-aminoacyl-L-glutamyl-L-glutamyl-L-tyrosyl-[tubulin] + H2O = C-terminal L-alpha-aminoacyl-L-glutamyl-L-glutamyl-[tubulin] + L-tyrosine. The enzyme catalyses C-terminal L-alpha-aminoacyl-L-glutamyl-L-glutamyl-L-phenylalanyl-[tubulin] + H2O = C-terminal L-alpha-aminoacyl-L-glutamyl-L-glutamyl-[tubulin] + L-phenylalanine. In terms of biological role, tyrosine carboxypeptidase that removes the C-terminal tyrosine residue of alpha-tubulin, thereby regulating microtubule dynamics and function. Also able to remove the C-terminal phenylalanine residue of alpha-tubulin TUBA8. Recognizes adjacent tubulin dimers along the same protofilament. The chain is Microtubule-associated tyrosine carboxypeptidase 1 from Homo sapiens (Human).